The sequence spans 407 residues: Proteasome-activating nucleotidase (407 aa).

A coiled-coil region spans residues 22 to 67 (KEKTQIAELESKVLRLELKNKDINRENVQIKKENEILKRELDKLRI). Residues 192 to 197 (GTGKTL) and histidine 331 contribute to the ATP site. The tract at residues 405–407 (MYG) is docks into pockets in the proteasome alpha-ring to cause gate opening.

The protein belongs to the AAA ATPase family. As to quaternary structure, homohexamer. The hexameric complex has a two-ring architecture resembling a top hat that caps the 20S proteasome core at one or both ends. Upon ATP-binding, the C-terminus of PAN interacts with the alpha-rings of the proteasome core by binding to the intersubunit pockets.

The protein localises to the cytoplasm. In terms of biological role, ATPase which is responsible for recognizing, binding, unfolding and translocation of substrate proteins into the archaeal 20S proteasome core particle. Is essential for opening the gate of the 20S proteasome via an interaction with its C-terminus, thereby allowing substrate entry and access to the site of proteolysis. Thus, the C-termini of the proteasomal ATPase function like a 'key in a lock' to induce gate opening and therefore regulate proteolysis. Unfolding activity requires energy from ATP hydrolysis, whereas ATP binding alone promotes ATPase-20S proteasome association which triggers gate opening, and supports translocation of unfolded substrates. The protein is Proteasome-activating nucleotidase of Methanococcus maripaludis (strain DSM 14266 / JCM 13030 / NBRC 101832 / S2 / LL).